The chain runs to 389 residues: Apicidin F cluster transcription factor apf2 (389 aa).

2 stretches are compositionally biased toward polar residues: residues 1–13 (MSPPSQDWSTITD) and 75–84 (PDSATPKPSL). 3 disordered regions span residues 1–27 (MSPPSQDWSTITDANERRKAQNRVAQR), 65–84 (PQSVEDHDTNPDSATPKPSL), and 219–239 (EVPNLGDSNEGSRSISTTKQP). Positions 12–38 (TDANERRKAQNRVAQRNYRSRQKLRVE) are basic DNA-binding region. ANK repeat units lie at residues 241-270 (EFKTPVLTAIAKGKLDIARLLISSGANIDT), 274-303 (HGRTNLHYAVSRSDAKTVRSLLELGADLLM), 307-336 (SGVTALHMAVGADDQDMVKLLLGWCEQQDR), and 357-386 (QNMTPLHLCVVMERMDMLKILLDYGADVNI).

The protein belongs to the bZIP family. Highly divergent.

It localises to the nucleus. Transcription factor that regulates the expression of the gene cluster that mediates the biosynthesis of apicidin F. Binds to the eight-base-pair motif 5'-TGACGTGA-3' called the 'Api-box' that is found in all promoters of the apicidin F cluster except in the promoter region of apf2 itself. This is Apicidin F cluster transcription factor apf2 from Gibberella fujikuroi (strain CBS 195.34 / IMI 58289 / NRRL A-6831) (Bakanae and foot rot disease fungus).